The chain runs to 153 residues: SKP1-like protein 9 (153 aa).

The segment at 95–153 is interaction with the F-box domain of F-box proteins; it reads IKAANYLNIKSLFDLACQTVAEIIKGNTPEQIREFFNIENDLTPEEEAAIRRENKWAFE.

The protein belongs to the SKP1 family. As to quaternary structure, part of a SCF (SKP1-cullin-F-box) protein ligase complex. Interacts with CPR1/CPR30 and At3g61590. In terms of tissue distribution, expressed in leaves, shoot apical meristem (SAM), roots, flowers and pollen.

It localises to the nucleus. The protein operates within protein modification; protein ubiquitination. Involved in ubiquitination and subsequent proteasomal degradation of target proteins. Together with CUL1, RBX1 and a F-box protein, it forms a SCF E3 ubiquitin ligase complex. The functional specificity of this complex depends on the type of F-box protein. In the SCF complex, it serves as an adapter that links the F-box protein to CUL1. The chain is SKP1-like protein 9 (ASK9) from Arabidopsis thaliana (Mouse-ear cress).